We begin with the raw amino-acid sequence, 347 residues long: D-alanine--D-alanine ligase (347 aa).

Residues 134-332 (KLYAKDLGVK…LAQSLPKTPK (199 aa)) form the ATP-grasp domain. 161 to 216 (LIGFNFPFIIKPSNAGSSLGVSVVKEEKELIYALDGAFEYSKEILIEPFIQGVKEY) lines the ATP pocket. 3 residues coordinate Mg(2+): Asp-288, Glu-300, and Asn-302.

This sequence belongs to the D-alanine--D-alanine ligase family. The cofactor is Mg(2+). Mn(2+) serves as cofactor.

The protein localises to the cytoplasm. It carries out the reaction 2 D-alanine + ATP = D-alanyl-D-alanine + ADP + phosphate + H(+). It functions in the pathway cell wall biogenesis; peptidoglycan biosynthesis. Functionally, cell wall formation. The protein is D-alanine--D-alanine ligase of Helicobacter pylori (strain Shi470).